We begin with the raw amino-acid sequence, 280 residues long: uncharacterized protein (280 aa).

Disordered stretches follow at residues 1–83 (MELK…EEEQ) and 248–280 (IRHR…EARL). Residues 12–25 (SAKTDNHTVYQNSP) show a composition bias toward polar residues. Basic and acidic residues-rich tracts occupy residues 41–71 (KQTR…RVDD) and 249–280 (RHRE…EARL).

It belongs to the chlamydial CPn_0705/CT_671/TC_0042 family.

This is an uncharacterized protein from Chlamydia pneumoniae (Chlamydophila pneumoniae).